Here is a 502-residue protein sequence, read N- to C-terminus: Mannitol 2-dehydrogenase (502 aa).

An NAD(+)-binding site is contributed by 37 to 48 (IVHIGVGGFHRA).

This sequence belongs to the mannitol dehydrogenase family. Monomer.

The catalysed reaction is D-mannitol + NAD(+) = D-fructose + NADH + H(+). Functionally, catalyzes the NAD(H)-dependent interconversion of D-fructose and D-mannitol in the mannitol metabolic pathway. The protein is Mannitol 2-dehydrogenase of Emericella nidulans (strain FGSC A4 / ATCC 38163 / CBS 112.46 / NRRL 194 / M139) (Aspergillus nidulans).